Reading from the N-terminus, the 223-residue chain is Golgi SNAP receptor complex member 1-1 (223 aa).

Topologically, residues 1-201 (MDVPSSWDAL…AAIKRKKSMD (201 aa)) are cytoplasmic. Residues 8–67 (DALRKQARKIEAQLDEQMHSYRRLVSTKALSKSDGNESDLEAGIDLLLRQLQQVNAQMQA) adopt a coiled-coil conformation. The chain crosses the membrane as a helical; Anchor for type IV membrane protein span at residues 202 to 222 (TIILSLVAAVCTFLIFIYWIT). Position 223 (Lys-223) is a topological domain, vesicular.

The protein belongs to the GOSR1 family. In terms of assembly, component of several multiprotein Golgi SNARE complexes.

It localises to the golgi apparatus membrane. Its function is as follows. Involved in transport from the ER to the Golgi apparatus as well as in intra-Golgi transport. It belongs to a super-family of proteins called t-SNAREs or soluble NSF (N-ethylmaleimide-sensitive factor) attachment protein receptor. In Arabidopsis thaliana (Mouse-ear cress), this protein is Golgi SNAP receptor complex member 1-1 (GOS11).